Here is a 126-residue protein sequence, read N- to C-terminus: Large ribosomal subunit protein bL12 (126 aa).

The disordered stretch occupies residues 97–126; it reads PQPVKSGVSKEEAEEAKKQLAESGAEVEVK. Residues 104–116 are compositionally biased toward basic and acidic residues; that stretch reads VSKEEAEEAKKQL.

Belongs to the bacterial ribosomal protein bL12 family. In terms of assembly, homodimer. Part of the ribosomal stalk of the 50S ribosomal subunit. Forms a multimeric L10(L12)X complex, where L10 forms an elongated spine to which 2 to 4 L12 dimers bind in a sequential fashion. Binds GTP-bound translation factors.

In terms of biological role, forms part of the ribosomal stalk which helps the ribosome interact with GTP-bound translation factors. Is thus essential for accurate translation. In Geotalea uraniireducens (strain Rf4) (Geobacter uraniireducens), this protein is Large ribosomal subunit protein bL12.